Reading from the N-terminus, the 929-residue chain is Dual specificity protein phosphatase PHS1 (929 aa).

Disordered stretches follow at residues 1 to 27 (MAEP…LVHD) and 545 to 618 (PESP…SLSS). 2 stretches are compositionally biased toward basic and acidic residues: residues 552-580 (HGHE…ESDM) and 591-606 (ENKE…ESWH). The Tyrosine-protein phosphatase domain maps to 703-848 (KPSMIQENLF…LINLDKKCHG (146 aa)). The active-site Phosphocysteine intermediate is Cys-792. 792–798 (CFEGRSR) lines the substrate pocket. A Nuclear export signal motif is present at residues 903-911 (QKALEALKL).

Interacts with MPK18. As to expression, expressed in roots, leaves and flowers.

It is found in the cytoplasm. It carries out the reaction O-phospho-L-seryl-[protein] + H2O = L-seryl-[protein] + phosphate. The enzyme catalyses O-phospho-L-threonyl-[protein] + H2O = L-threonyl-[protein] + phosphate. It catalyses the reaction O-phospho-L-tyrosyl-[protein] + H2O = L-tyrosyl-[protein] + phosphate. In terms of biological role, probable dual specificity phosphatase that binds and dephosphorylates MPK18, modulating the organization and dynamics of cortical microtubules. Acts as a negative regulator of abscisic acid (ABA) signaling during seed germination and light-induced stomata aperture. This chain is Dual specificity protein phosphatase PHS1 (PHS1), found in Arabidopsis thaliana (Mouse-ear cress).